The following is a 97-amino-acid chain: Aspartyl/glutamyl-tRNA(Asn/Gln) amidotransferase subunit C (97 aa).

This sequence belongs to the GatC family. As to quaternary structure, heterotrimer of A, B and C subunits.

It carries out the reaction L-glutamyl-tRNA(Gln) + L-glutamine + ATP + H2O = L-glutaminyl-tRNA(Gln) + L-glutamate + ADP + phosphate + H(+). It catalyses the reaction L-aspartyl-tRNA(Asn) + L-glutamine + ATP + H2O = L-asparaginyl-tRNA(Asn) + L-glutamate + ADP + phosphate + 2 H(+). Allows the formation of correctly charged Asn-tRNA(Asn) or Gln-tRNA(Gln) through the transamidation of misacylated Asp-tRNA(Asn) or Glu-tRNA(Gln) in organisms which lack either or both of asparaginyl-tRNA or glutaminyl-tRNA synthetases. The reaction takes place in the presence of glutamine and ATP through an activated phospho-Asp-tRNA(Asn) or phospho-Glu-tRNA(Gln). In Synechococcus sp. (strain CC9605), this protein is Aspartyl/glutamyl-tRNA(Asn/Gln) amidotransferase subunit C.